The following is a 349-amino-acid chain: Heat-inducible transcription repressor HrcA (349 aa).

It belongs to the HrcA family.

In terms of biological role, negative regulator of class I heat shock genes (grpE-dnaK-dnaJ and groELS operons). Prevents heat-shock induction of these operons. This chain is Heat-inducible transcription repressor HrcA, found in Xylella fastidiosa (strain 9a5c).